Consider the following 156-residue polypeptide: Endoribonuclease YbeY (156 aa).

Zn(2+)-binding residues include H114, H118, and H124.

Belongs to the endoribonuclease YbeY family. The cofactor is Zn(2+).

The protein localises to the cytoplasm. Functionally, single strand-specific metallo-endoribonuclease involved in late-stage 70S ribosome quality control and in maturation of the 3' terminus of the 16S rRNA. This chain is Endoribonuclease YbeY, found in Sodalis glossinidius (strain morsitans).